Here is a 1594-residue protein sequence, read N- to C-terminus: Protein SHORTAGE IN CHIASMATA 1 (1594 aa).

5 disordered regions span residues 1148 to 1180 (DSRS…SKKK), 1239 to 1283 (APFK…QPDF), 1396 to 1426 (AADI…YADN), 1491 to 1523 (RSRA…NTKR), and 1536 to 1594 (GGNK…LVWK). Low complexity predominate over residues 1151-1165 (SVMTDSSSSVSSGPD). Composition is skewed to basic and acidic residues over residues 1254–1265 (PSKDPERFDKKS) and 1402–1414 (SSER…DSKY). A compositionally biased stretch (polar residues) spans 1577–1594 (QSLSYTANGTGQTKLVWK).

This sequence belongs to the XPF family. In terms of assembly, interacts with PTD. In terms of tissue distribution, highest levels in young buds, where male meiosis occurs. Also present at low levels in plantlets, leaves, flowers, and roots.

The protein localises to the nucleus. Essential for the formation of class I meiotic crossovers. The chain is Protein SHORTAGE IN CHIASMATA 1 from Arabidopsis thaliana (Mouse-ear cress).